A 62-amino-acid chain; its full sequence is Alpha-conotoxin Vt1.27 (62 aa).

A signal peptide spans 1-21 (MGMRMMFTVFLLVVLATTVVS). A propeptide spanning residues 22–40 (FTLDRASDGASAAADLVAR) is cleaved from the precursor. Cystine bridges form between Cys46–Cys52 and Cys47–Cys61.

The protein belongs to the conotoxin A superfamily. Expressed by the venom duct.

Its subcellular location is the secreted. Functionally, the short (45-61) amidated synthetic peptide inhibits the rat neuronal alpha-3-beta-2/CHRNA3-CHRNB2 nicotinic acetylcholine receptor (nAChR) (IC(50)=1.16 uM). It also inhibits Cav2.2/CACNA1C voltage-gated calcium channel (IC(50)=398 nM). In vivo, when tested in rat pain models, this short amidated peptide increases the pain threshold. This chain is Alpha-conotoxin Vt1.27, found in Conus planorbis (Planorbis cone).